A 152-amino-acid chain; its full sequence is Superoxide dismutase [Cu-Zn] (152 aa).

3 residues coordinate Cu cation: His-45, His-47, and His-62. Cysteines 56 and 145 form a disulfide. Residues His-62, His-70, His-79, and Asp-82 each coordinate Zn(2+). His-119 contributes to the Cu cation binding site.

The protein belongs to the Cu-Zn superoxide dismutase family. Homodimer. Requires Cu cation as cofactor. Zn(2+) is required as a cofactor.

Its subcellular location is the cytoplasm. The catalysed reaction is 2 superoxide + 2 H(+) = H2O2 + O2. Functionally, destroys radicals which are normally produced within the cells and which are toxic to biological systems. The chain is Superoxide dismutase [Cu-Zn] (SODCC) from Carica papaya (Papaya).